The sequence spans 151 residues: MGRMHSRGKGISASALPYKRSSPSWLKTTSQDVDESICKFAKKGLTPSQIGVILRDSHGIPQVKSVTGSKILRILKAHGLAPEIPEDLYHLIKKAVAIRKHLERNRKDKDSKFRLILVESRIHRLARYYKKTKKLPPVWKYESTTASTLVA.

It belongs to the universal ribosomal protein uS15 family.

The chain is Small ribosomal subunit protein uS15y (RPS13B) from Arabidopsis thaliana (Mouse-ear cress).